A 72-amino-acid polypeptide reads, in one-letter code: Penaeidin-2b (72 aa).

An N-terminal signal peptide occupies residues 1-21 (MRLVVCLVFLASFALVCQGEA). Disulfide bonds link Cys45/Cys59, Cys48/Cys66, and Cys60/Cys67. A Lysine amide modification is found at Lys71.

Belongs to the penaeidin family.

The protein resides in the cytoplasmic granule. Functionally, antibacterial and antifungal activity. Presents chitin-binding activity. This is Penaeidin-2b from Penaeus vannamei (Whiteleg shrimp).